The chain runs to 101 residues: NADH-quinone oxidoreductase subunit K (101 aa).

A run of 3 helical transmembrane segments spans residues 4 to 24 (LGHM…GIFL), 30 to 50 (IVLL…FVAF), and 62 to 82 (FVFF…AILV).

It belongs to the complex I subunit 4L family. As to quaternary structure, NDH-1 is composed of 14 different subunits. Subunits NuoA, H, J, K, L, M, N constitute the membrane sector of the complex.

The protein resides in the cell inner membrane. The enzyme catalyses a quinone + NADH + 5 H(+)(in) = a quinol + NAD(+) + 4 H(+)(out). In terms of biological role, NDH-1 shuttles electrons from NADH, via FMN and iron-sulfur (Fe-S) centers, to quinones in the respiratory chain. The immediate electron acceptor for the enzyme in this species is believed to be ubiquinone. Couples the redox reaction to proton translocation (for every two electrons transferred, four hydrogen ions are translocated across the cytoplasmic membrane), and thus conserves the redox energy in a proton gradient. This is NADH-quinone oxidoreductase subunit K from Stenotrophomonas maltophilia (strain R551-3).